The following is a 168-amino-acid chain: Vasopressin-neurophysin 2-copeptin (168 aa).

The first 23 residues, 1 to 23 (MLARMLNTTLSACFLSLLAFSSA), serve as a signal peptide directing secretion. A disulfide bond links C24 and C29. G32 is subject to Glycine amide. 7 disulfide bridges follow: C45/C89, C48/C62, C56/C79, C63/C69, C96/C108, C102/C120, and C109/C114. N135 carries an N-linked (GlcNAc...) asparagine glycan.

Belongs to the vasopressin/oxytocin family. Interacts with vasopressin receptors V1bR/AVPR1B (Ki=85 pM), V1aR/AVPR1A (Ki=0.6 nM) and V2R/AVPR2 (Ki=4.9 nM). Interacts with oxytocin receptor (OXTR) (Ki=110 nM).

It localises to the secreted. Its function is as follows. Neurophysin 2 specifically binds vasopressin. Functionally, vasopressin has a direct antidiuretic action on the kidney, it also causes vasoconstriction of the peripheral vessels. Acts by binding to vasopressin receptors (V1bR/AVPR1B, V1aR/AVPR1A, and V2R/AVPR2). The chain is Vasopressin-neurophysin 2-copeptin (Avp) from Mus musculus (Mouse).